The following is a 149-amino-acid chain: Large ribosomal subunit protein uL11 (149 aa).

The protein belongs to the universal ribosomal protein uL11 family. As to quaternary structure, part of the ribosomal stalk of the 50S ribosomal subunit. Interacts with L10 and the large rRNA to form the base of the stalk. L10 forms an elongated spine to which L12 dimers bind in a sequential fashion forming a multimeric L10(L12)X complex. Post-translationally, one or more lysine residues are methylated.

Its function is as follows. Forms part of the ribosomal stalk which helps the ribosome interact with GTP-bound translation factors. The protein is Large ribosomal subunit protein uL11 of Methylobacterium radiotolerans (strain ATCC 27329 / DSM 1819 / JCM 2831 / NBRC 15690 / NCIMB 10815 / 0-1).